A 278-amino-acid polypeptide reads, in one-letter code: 3-methyl-2-oxobutanoate hydroxymethyltransferase (278 aa).

Mg(2+) is bound by residues Asp44 and Asp83. 3-methyl-2-oxobutanoate-binding positions include 44 to 45 (DS), Asp83, and Lys112. Glu114 is a binding site for Mg(2+). The active-site Proton acceptor is Glu181.

Belongs to the PanB family. In terms of assembly, homodecamer; pentamer of dimers. Mg(2+) is required as a cofactor.

The protein localises to the cytoplasm. It carries out the reaction 3-methyl-2-oxobutanoate + (6R)-5,10-methylene-5,6,7,8-tetrahydrofolate + H2O = 2-dehydropantoate + (6S)-5,6,7,8-tetrahydrofolate. It participates in cofactor biosynthesis; (R)-pantothenate biosynthesis; (R)-pantoate from 3-methyl-2-oxobutanoate: step 1/2. Its function is as follows. Catalyzes the reversible reaction in which hydroxymethyl group from 5,10-methylenetetrahydrofolate is transferred onto alpha-ketoisovalerate to form ketopantoate. This Roseiflexus sp. (strain RS-1) protein is 3-methyl-2-oxobutanoate hydroxymethyltransferase.